A 183-amino-acid polypeptide reads, in one-letter code: 1,6-anhydro-N-acetylmuramyl-L-alanine amidase AmpD (183 aa).

The N-acetylmuramoyl-L-alanine amidase domain maps to 30 to 167; it reads LLVVHNISLP…APDRKTDPGP (138 aa). His34 contributes to the Zn(2+) binding site. Glu116 functions as the Proton acceptor in the catalytic mechanism. Positions 154 and 164 each coordinate Zn(2+).

This sequence belongs to the N-acetylmuramoyl-L-alanine amidase 2 family. Requires Zn(2+) as cofactor.

It localises to the cytoplasm. The enzyme catalyses Hydrolyzes the link between N-acetylmuramoyl residues and L-amino acid residues in certain cell-wall glycopeptides.. Its function is as follows. Involved in cell wall peptidoglycan recycling. Specifically cleaves the amide bond between the lactyl group of N-acetylmuramic acid and the alpha-amino group of the L-alanine in degradation products containing an anhydro N-acetylmuramyl moiety. Is also involved in beta-lactamase induction. This chain is 1,6-anhydro-N-acetylmuramyl-L-alanine amidase AmpD (ampD), found in Escherichia coli (strain K12).